Consider the following 565-residue polypeptide: Deoxyribodipyrimidine photo-lyase, mitochondrial (565 aa).

Positions 75 to 226 (STVMHWFRND…QLKYYHDSCI (152 aa)) constitute a Photolyase/cryptochrome alpha/beta domain. FAD-binding positions include tyrosine 326 and 338-342 (TSGLS). 2 interaction with DNA regions span residues 384–391 (EVAWRDFY) and 451–452 (NR). 482-484 (DGD) contacts FAD. Glutamine 514 contributes to the DNA binding site.

The protein belongs to the DNA photolyase class-1 family. Monomer. Requires FAD as cofactor. (6R)-5,10-methylene-5,6,7,8-tetrahydrofolate is required as a cofactor.

It is found in the nucleus. The protein localises to the mitochondrion. It carries out the reaction cyclobutadipyrimidine (in DNA) = 2 pyrimidine residues (in DNA).. Involved in repair of UV radiation-induced DNA damage. Catalyzes the light-dependent monomerization (300-600 nm) of cyclobutyl pyrimidine dimers (in cis-syn configuration), which are formed between adjacent bases on the same DNA strand upon exposure to ultraviolet radiation. This Saccharomyces cerevisiae (strain ATCC 204508 / S288c) (Baker's yeast) protein is Deoxyribodipyrimidine photo-lyase, mitochondrial (PHR1).